Here is a 485-residue protein sequence, read N- to C-terminus: Pumilio domain-containing protein 7 (485 aa).

Residues 29–72 (NKTHKNKNPKPPVKLLPYRHGSNTTSSDSDSYIFNSGSGSSDAE) are disordered. Residues 49-71 (GSNTTSSDSDSYIFNSGSGSSDA) show a composition bias toward polar residues. Pumilio repeat units lie at residues 86-124 (DVLLNGQLIDFAIDPSGVKFLEANYPLDSEDQIRKAVFE), 128-163 (ESTTLFVGLCHSRNGNFIVQKLVELATPAEQRELLR), 164-200 (QMIDGGLLAMCKDKFACRVVQLALQKFDHSNVFQLIQ), 201-236 (ELSTFDLAAMCTDQISIHVIQRVVKQLPVDMWTFFV), 237-279 (HFLS…FRIQ), 287-324 (CIVRNCYRLSSNEFANYVIQYVIKSSGIMEMYRDTIID), 326-361 (CLLRNLLSMSQDKYASHVIEGAFLFAPPALLHEMME), and 370-411 (DVES…RELP). The segment at 439 to 454 (FSSGKKIIDSVMRHGV) is RNA-binding.

RNA-binding protein that binds to the consensus sequence 5'-CUCUGUAUCUUGU-3' in mRNA 3'-UTRs and modulates mRNA expression and stability. Functions redundantly with puf-5 and puf-6 in oocyte formation and organization, early embryonic cell divisions, and repression of expression of glp-1 and other maternal mRNAs in late oogenesis. The protein is Pumilio domain-containing protein 7 of Caenorhabditis elegans.